The chain runs to 180 residues: Large ribosomal subunit protein uL5 (180 aa).

The protein belongs to the universal ribosomal protein uL5 family. As to quaternary structure, part of the 50S ribosomal subunit; part of the 5S rRNA/L5/L18/L25 subcomplex. Contacts the 5S rRNA and the P site tRNA. Forms a bridge to the 30S subunit in the 70S ribosome.

This is one of the proteins that bind and probably mediate the attachment of the 5S RNA into the large ribosomal subunit, where it forms part of the central protuberance. In the 70S ribosome it contacts protein S13 of the 30S subunit (bridge B1b), connecting the 2 subunits; this bridge is implicated in subunit movement. Contacts the P site tRNA; the 5S rRNA and some of its associated proteins might help stabilize positioning of ribosome-bound tRNAs. The chain is Large ribosomal subunit protein uL5 from Xanthomonas campestris pv. campestris (strain 8004).